We begin with the raw amino-acid sequence, 240 residues long: TATA-box-binding protein (240 aa).

Residues 21–61 (NTRQVWENQNRDGTKPATTFQSEEDIKRAAPESEKDTSATS) are disordered. Over residues 44-57 (EDIKRAAPESEKDT) the composition is skewed to basic and acidic residues. 2 consecutive repeat copies span residues 67–143 (LQNI…ARII) and 157–234 (IQNI…YPVL).

It belongs to the TBP family. Binds DNA as monomer. The 1.2 MDa TFIID complex is composed of TATA binding protein (TBP) and the 14 TBP-associated factors. One copy of each TAF1, TAF2, TAF3, TAF7, TAF8, TAF11, TAF13, two copies of each TAF4, TAF5, TAF6, TAF9, TAF10, TAF12, and three copies of TAF14. Interacts with TFC8.

The protein resides in the nucleus. General transcription factor that functions at the core of the DNA-binding general transcription factor complex TFIID. Binding of TFIID to a promoter (with or without TATA element) is the initial step in preinitiation complex (PIC) formation. TFIID plays a key role in the regulation of gene expression by RNA polymerase II through different activities such as transcription activator interaction, core promoter recognition and selectivity, TFIIA and TFIIB interaction, chromatin modification (histone acetylation by TAF1), facilitation of DNA opening and initiation of transcription. The protein is TATA-box-binding protein (SPT15) of Saccharomyces cerevisiae (strain ATCC 204508 / S288c) (Baker's yeast).